The primary structure comprises 266 residues: Orotidine 5'-phosphate decarboxylase (266 aa).

Substrate contacts are provided by residues Asp-38, 60-62 (KTH), 92-101 (DRKFADIGNT), Tyr-218, and Arg-236. Lys-94 serves as the catalytic Proton donor.

It belongs to the OMP decarboxylase family.

It catalyses the reaction orotidine 5'-phosphate + H(+) = UMP + CO2. The protein operates within pyrimidine metabolism; UMP biosynthesis via de novo pathway; UMP from orotate: step 2/2. The polypeptide is Orotidine 5'-phosphate decarboxylase (URA3) (Candida maltosa (Yeast)).